Reading from the N-terminus, the 248-residue chain is Orotidine 5'-phosphate decarboxylase (248 aa).

Substrate contacts are provided by residues Asp-22, Lys-44, 71 to 80 (DLKFHDIPNT), Thr-131, Arg-192, Gln-201, Gly-221, and Arg-222. Lys-73 functions as the Proton donor in the catalytic mechanism.

It belongs to the OMP decarboxylase family. Type 1 subfamily. In terms of assembly, homodimer.

The enzyme catalyses orotidine 5'-phosphate + H(+) = UMP + CO2. It functions in the pathway pyrimidine metabolism; UMP biosynthesis via de novo pathway; UMP from orotate: step 2/2. Functionally, catalyzes the decarboxylation of orotidine 5'-monophosphate (OMP) to uridine 5'-monophosphate (UMP). This chain is Orotidine 5'-phosphate decarboxylase, found in Photorhabdus laumondii subsp. laumondii (strain DSM 15139 / CIP 105565 / TT01) (Photorhabdus luminescens subsp. laumondii).